The primary structure comprises 557 residues: DNA ligase (557 aa).

Residue E249 coordinates ATP. K251 functions as the N6-AMP-lysine intermediate in the catalytic mechanism. ATP is bound by residues R256, R271, E301, F340, R417, and K423.

It belongs to the ATP-dependent DNA ligase family. The cofactor is Mg(2+).

It carries out the reaction ATP + (deoxyribonucleotide)n-3'-hydroxyl + 5'-phospho-(deoxyribonucleotide)m = (deoxyribonucleotide)n+m + AMP + diphosphate.. DNA ligase that seals nicks in double-stranded DNA during DNA replication, DNA recombination and DNA repair. In Methanothermobacter thermautotrophicus (Methanobacterium thermoformicicum), this protein is DNA ligase.